We begin with the raw amino-acid sequence, 1470 residues long: Membrane-associated guanylate kinase, WW and PDZ domain-containing protein 3 (1470 aa).

The 91-residue stretch at 18–108 (CAVSWAGPPG…PIRLKTVKPG (91 aa)) folds into the PDZ 1 domain. The interval 18-108 (CAVSWAGPPG…PIRLKTVKPG (91 aa)) is interaction with ADRB1 and TGFA. The Guanylate kinase-like domain maps to 116–290 (RHYLSLQFQK…RSMDFRNYMM (175 aa)). 123–130 (FQKGSIDH) lines the ATP pocket. The tract at residues 184-266 (TYDGNFYGTP…ETREMHSESS (83 aa)) is disordered. Residues 193 to 204 (PKPPAEPSPFQP) show a composition bias toward pro residues. Serine 236 carries the post-translational modification Phosphoserine. The segment covering 238 to 247 (LPEEEEDEDK) has biased composition (acidic residues). WW domains follow at residues 296 to 329 (EPLP…DPRL) and 342 to 375 (GELP…NPVE). The PDZ 2 domain maps to 413 to 495 (RASLKKSTMG…NQYVNLTLCR (83 aa)). The segment at 413 to 495 (RASLKKSTMG…NQYVNLTLCR (83 aa)) is interaction with PTEN. Residues 550–575 (LLSSDRLNGPSDSNEQRASLASSGSS) form a disordered region. Residues 559 to 575 (PSDSNEQRASLASSGSS) show a composition bias toward polar residues. One can recognise a PDZ 3 domain in the interval 581–657 (TIPLVKGPKG…GADVPLLILR (77 aa)). Serine 598 is subject to Phosphoserine. The tract at residues 665–700 (KTAKMKTDTKETSGSLETINEPTPQPMPFPPSIIRS) is disordered. Residues 676-686 (TSGSLETINEP) are compositionally biased toward polar residues. Residue serine 702 is modified to Phosphoserine. A PDZ 4 domain is found at 729–811 (DVFLRKQESG…NGHVLLTVRR (83 aa)). The interaction with ADGRB1 stretch occupies residues 729 to 811 (DVFLRKQESG…NGHVLLTVRR (83 aa)). Residues 818-847 (KQPEDESPQAFSQSGSPRLNRTELPTRSAP) form a disordered region. Polar residues predominate over residues 826-847 (QAFSQSGSPRLNRTELPTRSAP). Phosphoserine is present on residues serine 833 and serine 916. In terms of domain architecture, PDZ 5 spans 852–939 (DVILQRKENE…TVTLTVVAEE (88 aa)). The tract at residues 852–939 (DVILQRKENE…TVTLTVVAEE (88 aa)) is interaction with LPAR2 and GRIN2B. The interval 939–976 (EEHHGPPSGTNSARQSPALQHRPMGQAQATHIPGDRTA) is disordered. Residues 946–956 (SGTNSARQSPA) show a composition bias toward polar residues. Residues 1022-1104 (PVELERGPRG…KVLLLLRPGT (83 aa)) form the PDZ 6 domain. Disordered stretches follow at residues 1124 to 1146 (IYDE…ESHV) and 1167 to 1470 (DTVQ…DKQL). The segment covering 1175-1191 (TLNGSQPEMKYQSIQKN) has biased composition (polar residues). Basic and acidic residues-rich tracts occupy residues 1193 to 1209 (SKKD…KNLL) and 1230 to 1263 (RHSE…KGEN). Polar residues predominate over residues 1285-1304 (SSSPRKQQKIGGNSLSNTEG). Residue serine 1321 is modified to Phosphoserine. Basic and acidic residues-rich tracts occupy residues 1326-1340 (PEGK…KDLK), 1350-1361 (RSPEKRSSKVDE), 1377-1397 (VSEK…DKTG), and 1422-1431 (EVTDRGKERA).

Belongs to the MAGUK family. In terms of assembly, interacts with ADRB1, ADGRB1, LPAR2/EDG4, FZD4, FZD7, GRIN2B, TGFA and VANGL2. Interacts with PTEN. Interacts with ADRB1, PTPRB and unidentified tyrosine phosphorylated proteins. Interacts with DLL1. Interacts with PRRG4 (via cytoplasmic domain).

The protein localises to the cell membrane. Its subcellular location is the cell junction. It is found in the tight junction. It localises to the nucleus. Its function is as follows. Acts as a scaffolding protein at cell-cell junctions, thereby regulating various cellular and signaling processes. Cooperates with PTEN to modulate the kinase activity of AKT1. Its interaction with PTPRB and tyrosine phosphorylated proteins suggests that it may link receptor tyrosine phosphatase with its substrates at the plasma membrane. In polarized epithelial cells, involved in efficient trafficking of TGFA to the cell surface. Regulates the ability of LPAR2 to activate ERK and RhoA pathways. Regulates the JNK signaling cascade via its interaction with FZD4 and VANGL2. This chain is Membrane-associated guanylate kinase, WW and PDZ domain-containing protein 3 (Magi3), found in Rattus norvegicus (Rat).